Consider the following 1401-residue polypeptide: MSDLLGILKQQGQSEEFDAIKIALASPELIRSWSYGEVKKPETINYRTFKPERDGLFCAKTFGPVKDYECLCGKYKRLKHRGVICEKCGVELALAKVRRERMGHIELASPVAHIWFLKSLPSRIGLLLDMTLRDIERVLYFEAFVVVDPGMTELERGQLLNDEAYLDAMEQYGDEFDARMGAEAIRDLLRQIDLEDEIRNLREELPTTNSETKIKKITKRLKLLEAFYESGNKPEWMIMDVLPVLPPDLRPLVPLDGGRFATSDLNDLYRRVINRNNRLKRLLDLNAPDIIVRNEKRMLQESVDALLDNGRRGRAITGTNKRPLKSLADMIKGKQGRFRQNLLGKRVDYSGRSVIVVGPTLKLHQCGLPKKMALELFKPFIFSKLEFRGLATTIKAAKKMVEREESVVWDILDDVIREHPILLNRAPTLHRLGIQAFEPVLIEGKAIQLHPLVCTAYNADFDGDQMAVHVPLTLEAQLEARSLMMSTNNILSPASGEPIIVPSQDVVLGLYYLTREKVNALGEGKIYSSAQEAQNFYEAGHLDIHAKIKIRMPKEDGETGYHLVETTVGRAILAEILPKGMPFDYINRTMTKKVISKVIDSCYRKFGLKETVIFADQLMYTGFKYATRSGASIGIEDMEIPDDKSSIIEHADNEVREIESQFRSGLVTNGERYNKVIDIWSRTNELVAKSMMSKIATEEVTDAKGNKVRQESFNPIFMMADSGARGSAAQIRQLAGMRGLMAAPDGSIIETPITANFREGLNVFQYFISTHGARKGLADTALKTANSGYLTRRLVDVAQDVVITEDDCGTDTGILMQPLIEGGDIVEPLHERVLGRVVASDVYIPTQTEPVVKAGTLLDEEWVEKLEKHGVDQVMVRSPITCQTRFGLCAKCYGRDLARGHLVNTGEAVGIIAAQSIGEPGTQLTMRTFHIGGAASRATAANNIQIKTKGVIRLHNIKTVTHENKNLVAVSRSGEVTIVDEFGRERERYKVPYGAVISAQDNSPVEAGQVIATWDPHTHPVISEVSGRLKFVDLIDGITMNRQTDELTGLSNIVIIDAKQRSAAGRDLRPMVKLVTDEGDDIYLAGTNVPAQYYLPVDAIVNFEDGSLVGIGDVIARIPQERSKTRDITGGLPRVADLFEARKPKDSAVMAEVSGLVNFGKETKGKRRLIINVSEDQCHEELIPKWRHISVFEGEHVERGEIIAEGALNPHDILRLLGVGALANYIVNEVQDVYRLQGVKINDKHIEVIVRQMLRKRVITFAGDSKFLVGEQVEESAMLQENDKLLAEGKQIARGTPILLGITKASLATESFISAASFQETTRVLTEAAVSGKVDELRGLKENVMVGRLIPAGTGYTYHQSRKAKRARAAAGGDSSATHTVTASDVEHALSEALNADNHEH.

Residues Cys70, Cys72, Cys85, and Cys88 each coordinate Zn(2+). Residues Asp460, Asp462, and Asp464 each coordinate Mg(2+). 4 residues coordinate Zn(2+): Cys808, Cys882, Cys889, and Cys892.

The protein belongs to the RNA polymerase beta' chain family. In terms of assembly, the RNAP catalytic core consists of 2 alpha, 1 beta, 1 beta' and 1 omega subunit. When a sigma factor is associated with the core the holoenzyme is formed, which can initiate transcription. The cofactor is Mg(2+). Requires Zn(2+) as cofactor.

It carries out the reaction RNA(n) + a ribonucleoside 5'-triphosphate = RNA(n+1) + diphosphate. Functionally, DNA-dependent RNA polymerase catalyzes the transcription of DNA into RNA using the four ribonucleoside triphosphates as substrates. This Legionella pneumophila (strain Paris) protein is DNA-directed RNA polymerase subunit beta'.